A 530-amino-acid polypeptide reads, in one-letter code: Glutamyl-tRNA reductase 2, chloroplastic (530 aa).

The N-terminal 64 residues, 1–64 (MAVSSAFVVT…RCEISPSNKA (64 aa)), are a transit peptide targeting the chloroplast. Substrate-binding positions include 134–137 (TCNR), Ser-194, 199–201 (EGQ), and Gln-205. The Nucleophile role is filled by Cys-135. NADP(+) is bound at residue 277-282 (GAGKMG).

Belongs to the glutamyl-tRNA reductase family. In terms of tissue distribution, expressed in roots and flowers. Detected in leaves, hypocotyls and cotyledons.

It localises to the plastid. Its subcellular location is the chloroplast. The enzyme catalyses (S)-4-amino-5-oxopentanoate + tRNA(Glu) + NADP(+) = L-glutamyl-tRNA(Glu) + NADPH + H(+). Its pathway is porphyrin-containing compound metabolism; protoporphyrin-IX biosynthesis; 5-aminolevulinate from L-glutamyl-tRNA(Glu): step 1/2. It functions in the pathway porphyrin-containing compound metabolism; chlorophyll biosynthesis. Catalyzes the NADPH-dependent reduction of glutamyl-tRNA(Glu) to glutamate 1-semialdehyde (GSA). Probably involved in wound-induced supply of heme to defensive hemoproteins outside plastids. In Arabidopsis thaliana (Mouse-ear cress), this protein is Glutamyl-tRNA reductase 2, chloroplastic (HEMA2).